The chain runs to 768 residues: Pentatricopeptide repeat-containing protein At4g01030, mitochondrial (768 aa).

The transit peptide at 1 to 25 (MYRFLGLTIHGGLIKRGLDNSDTRV) directs the protein to the mitochondrion. 16 PPR repeats span residues 22 to 52 (DTRV…MPKR), 53 to 87 (DDLA…GAKA), 88 to 122 (YDST…GLES), 123 to 153 (NVSM…MKDR), 154 to 188 (NLSS…GLKP), 189 to 223 (DIVT…GLKP), 224 to 254 (STSS…ILRN), 259 to 289 (DVYV…MDAK), 290 to 324 (NIVA…GIKP), 325 to 359 (DAIT…GVAP), 360 to 394 (NVVS…GVGP), 395 to 429 (NAAT…NLIC), 430 to 460 (DAYV…IKNK), 461 to 495 (SLAS…GMEP), 496 to 526 (DAIT…MRSR), and 532 to 562 (TIEH…MSLK). The tract at residues 567-642 (IWGAFLSSCK…QDLWSWIQID (76 aa)) is type E motif. Residues 643-673 (QTVHIFYAEGKTHPDEGDIYFELYKLVSEMK) are type E(+) motif. Positions 674 to 768 (KSGYVPDTSC…DGKCSCNDSW (95 aa)) are type DYW motif.

The protein belongs to the PPR family. PCMP-H subfamily.

The protein localises to the mitochondrion. In Arabidopsis thaliana (Mouse-ear cress), this protein is Pentatricopeptide repeat-containing protein At4g01030, mitochondrial (PCMP-H65).